A 220-amino-acid polypeptide reads, in one-letter code: 6-phosphogluconolactonase (220 aa).

It belongs to the glucosamine/galactosamine-6-phosphate isomerase family. 6-phosphogluconolactonase subfamily.

The enzyme catalyses 6-phospho-D-glucono-1,5-lactone + H2O = 6-phospho-D-gluconate + H(+). The protein operates within carbohydrate degradation; pentose phosphate pathway; D-ribulose 5-phosphate from D-glucose 6-phosphate (oxidative stage): step 2/3. Its function is as follows. Hydrolysis of 6-phosphogluconolactone to 6-phosphogluconate. The chain is 6-phosphogluconolactonase (pgl) from Thermotoga maritima (strain ATCC 43589 / DSM 3109 / JCM 10099 / NBRC 100826 / MSB8).